Consider the following 428-residue polypeptide: Histidine--tRNA ligase (428 aa).

The protein belongs to the class-II aminoacyl-tRNA synthetase family. As to quaternary structure, homodimer.

It localises to the cytoplasm. It carries out the reaction tRNA(His) + L-histidine + ATP = L-histidyl-tRNA(His) + AMP + diphosphate + H(+). The polypeptide is Histidine--tRNA ligase (Thermosynechococcus vestitus (strain NIES-2133 / IAM M-273 / BP-1)).